A 297-amino-acid chain; its full sequence is Acetaldehyde dehydrogenase (297 aa).

An NAD(+)-binding site is contributed by 15–18; that stretch reads SGSI. Cysteine 130 functions as the Acyl-thioester intermediate in the catalytic mechanism. NAD(+) contacts are provided by residues 162-170 and asparagine 272; that span reads SAGIATREN.

Belongs to the acetaldehyde dehydrogenase family.

It catalyses the reaction acetaldehyde + NAD(+) + CoA = acetyl-CoA + NADH + H(+). The sequence is that of Acetaldehyde dehydrogenase (mhpF) from Burkholderia pseudomallei (strain K96243).